Consider the following 627-residue polypeptide: MQSRALSRLRSYYKRSSVFPSSDNDRSVQLFNLVRSIYSSSSRPRVPQPEWLIGELCKVGKIAEARKLFDGLPERDVVTWTHVITGYIKLGDMREARELFDRVDSRKNVVTWTAMVSGYLRSKQLSIAEMLFQEMPERNVVSWNTMIDGYAQSGRIDKALELFDEMPERNIVSWNSMVKALVQRGRIDEAMNLFERMPRRDVVSWTAMVDGLAKNGKVDEARRLFDCMPERNIISWNAMITGYAQNNRIDEADQLFQVMPERDFASWNTMITGFIRNREMNKACGLFDRMPEKNVISWTTMITGYVENKENEEALNVFSKMLRDGSVKPNVGTYVSILSACSDLAGLVEGQQIHQLISKSVHQKNEIVTSALLNMYSKSGELIAARKMFDNGLVCQRDLISWNSMIAVYAHHGHGKEAIEMYNQMRKHGFKPSAVTYLNLLFACSHAGLVEKGMEFFKDLVRDESLPLREEHYTCLVDLCGRAGRLKDVTNFINCDDARLSRSFYGAILSACNVHNEVSIAKEVVKKVLETGSDDAGTYVLMSNIYAANGKREEAAEMRMKMKEKGLKKQPGCSWVKVGKQNHLFVVGDKSHPQFEALDSILSDLRNKMRKNKNVTSDAEEAEFLVI.

The transit peptide at 1-44 (MQSRALSRLRSYYKRSSVFPSSDNDRSVQLFNLVRSIYSSSSRP) directs the protein to the mitochondrion. PPR repeat units follow at residues 45-75 (RVPQPEWLIGELCKVGKIAEARKLFDGLPER), 76-110 (DVVTWTHVITGYIKLGDMREARELFDRVDSRKNVV), 111-138 (TWTAMVSGYLRSKQLSIAEMLFQEMPER), 139-173 (NVVSWNTMIDGYAQSGRIDKALELFDEMPERNIVS), 174-200 (WNSMVKALVQRGRIDEAMNLFERMPRR), 201-235 (DVVSWTAMVDGLAKNGKVDEARRLFDCMPERNIIS), 236-262 (WNAMITGYAQNNRIDEADQLFQVMPER), 263-293 (DFASWNTMITGFIRNREMNKACGLFDRMPEK), 294-328 (NVISWTTMITGYVENKENEEALNVFSKMLRDGSVK), 330-360 (NVGTYVSILSACSDLAGLVEGQQIHQLISKS), 365-396 (NEIVTSALLNMYSKSGELIAARKMFDNGLVCQ), 398-432 (DLISWNSMIAVYAHHGHGKEAIEMYNQMRKHGFKP), 433-467 (SAVTYLNLLFACSHAGLVEKGMEFFKDLVRDESLP), and 469-499 (REEHYTCLVDLCGRAGRLKDVTNFINCDDAR). The segment at 504–579 (FYGAILSACN…QPGCSWVKVG (76 aa)) is type E motif. The segment at 580 to 610 (KQNHLFVVGDKSHPQFEALDSILSDLRNKMR) is type E(+) motif.

The protein belongs to the PPR family. PCMP-E subfamily.

It localises to the mitochondrion. This Arabidopsis thaliana (Mouse-ear cress) protein is Pentatricopeptide repeat-containing protein At2g35030, mitochondrial (PCMP-E15).